The sequence spans 467 residues: MTMLLDGGPQFPGLGVGSFGAPRHHEMPNREPAGMGLNPFGDSTHAAAAAAAAAAFKLSPAAAHDLSSGQSSAFTPQGSGYANALGHHHHHHHHHHHTSQVPSYGGAASAAFNSTREFLFRQRSSGLSEAASGGGQHGLFAGSASSLHAPAGIPEPPSYLLFPGLHEQGAGHPSPTGHVDNNQVHLGLRGELFGRADPYRPVASPRTDPYAAGAQFPNYSPMNMNMGVNVAAHHGPGAFFRYMRQPIKQELSCKWIDEAQLSRPKKSCDRTFSTMHELVTHVTMEHVGGPEQNNHVCYWEECPREGKSFKAKYKLVNHIRVHTGEKPFPCPFPGCGKIFARSENLKIHKRTHTGEKPFKCEFEGCDRRFANSSDRKKHMHVHTSDKPYICKVCDKSYTHPSSLRKHMKVHESQGSDSSPAASSGYESSTPPAIASANSKDTTKTPSAVQTSTSHNPGLPPNFNEWYV.

Positions Leu-66–Ala-107 are disordered. Residues Ser-67 to Gly-80 show a composition bias toward polar residues. Residues Gly-86 to Thr-98 are compositionally biased toward basic residues. Lys-248 is covalently cross-linked (Glycyl lysine isopeptide (Lys-Gly) (interchain with G-Cter in SUMO2)). The C2H2-type 1; atypical zinc finger occupies Leu-251–His-286. The segment at His-295–His-322 adopts a C2H2-type 2; atypical zinc-finger fold. 2 short sequence motifs (nuclear localization signal) span residues Cys-297–His-322 and Cys-330–His-352. C2H2-type zinc fingers lie at residues Phe-328–His-352, Phe-358–His-382, and Tyr-388–His-410. The tract at residues Arg-404–Val-467 is disordered. Low complexity predominate over residues Ser-412–Ser-428. Over residues Ser-435–Asn-455 the composition is skewed to polar residues.

Belongs to the GLI C2H2-type zinc-finger protein family. In terms of assembly, interacts (via the C2H2-type domains 3, 4 and 5) with MDFIC (via the C2H2-type domains 3, 4 and 5); the interaction reduces its transcriptional activity. Interacts with KPNA1 and KPNA6. Interacts (via C2H2-type domains 3, 4 and 5) with GLI3; the interaction enhances its transcriptional activity.

The protein resides in the nucleus. It is found in the cytoplasm. Its function is as follows. Acts as a transcriptional activator. Required in the earliest stages in both axial midline development and left-right (LR) asymmetry specification. Binds to the minimal GLI-consensus sequence 5'-GGGTGGTC-3'. The polypeptide is Zinc finger protein ZIC 3 (ZIC3) (Homo sapiens (Human)).